The sequence spans 197 residues: Wadjet protein JetB (197 aa).

Its function is as follows. Component of antiplasmid transformation system Wadjet type I, composed of JetA, JetB, JetC and JetD. Expression of Wadjet type I in B.subtilis (strain BEST7003) reduces the transformation efficiency of plasmid pHCMC05. The protein is Wadjet protein JetB of Bacillus cereus (strain Q1).